A 257-amino-acid polypeptide reads, in one-letter code: 3-deoxy-manno-octulosonate cytidylyltransferase (257 aa).

Belongs to the KdsB family.

It is found in the cytoplasm. It catalyses the reaction 3-deoxy-alpha-D-manno-oct-2-ulosonate + CTP = CMP-3-deoxy-beta-D-manno-octulosonate + diphosphate. The protein operates within nucleotide-sugar biosynthesis; CMP-3-deoxy-D-manno-octulosonate biosynthesis; CMP-3-deoxy-D-manno-octulosonate from 3-deoxy-D-manno-octulosonate and CTP: step 1/1. Its pathway is bacterial outer membrane biogenesis; lipopolysaccharide biosynthesis. In terms of biological role, activates KDO (a required 8-carbon sugar) for incorporation into bacterial lipopolysaccharide in Gram-negative bacteria. This is 3-deoxy-manno-octulosonate cytidylyltransferase from Xylella fastidiosa (strain M12).